The chain runs to 478 residues: NADH-quinone oxidoreductase subunit N (478 aa).

The next 14 helical transmembrane spans lie at 5–25, 37–57, 68–88, 99–119, 121–141, 156–176, 199–219, 231–251, 268–288, 293–313, 320–340, 365–385, 401–421, and 446–466; these read LASP…VGVA, MLTL…ALGL, FAVM…VLSL, FEFP…VSAS, FMTL…LAAF, FVLG…IYGF, LTVG…AAPF, PTPV…AMML, VVAL…IGQT, LMAY…AAGS, LLIY…CILA, ALLL…SGFF, LLWG…YYYL, and VVAV…APIL.

Belongs to the complex I subunit 2 family. In terms of assembly, NDH-1 is composed of 14 different subunits. Subunits NuoA, H, J, K, L, M, N constitute the membrane sector of the complex.

It is found in the cell inner membrane. The catalysed reaction is a quinone + NADH + 5 H(+)(in) = a quinol + NAD(+) + 4 H(+)(out). Its function is as follows. NDH-1 shuttles electrons from NADH, via FMN and iron-sulfur (Fe-S) centers, to quinones in the respiratory chain. The immediate electron acceptor for the enzyme in this species is believed to be ubiquinone. Couples the redox reaction to proton translocation (for every two electrons transferred, four hydrogen ions are translocated across the cytoplasmic membrane), and thus conserves the redox energy in a proton gradient. The protein is NADH-quinone oxidoreductase subunit N of Granulibacter bethesdensis (strain ATCC BAA-1260 / CGDNIH1).